We begin with the raw amino-acid sequence, 628 residues long: Glutamyl-tRNA(Gln) amidotransferase subunit E (628 aa).

It belongs to the GatB/GatE family. GatE subfamily. As to quaternary structure, heterodimer of GatD and GatE.

It catalyses the reaction L-glutamyl-tRNA(Gln) + L-glutamine + ATP + H2O = L-glutaminyl-tRNA(Gln) + L-glutamate + ADP + phosphate + H(+). In terms of biological role, allows the formation of correctly charged Gln-tRNA(Gln) through the transamidation of misacylated Glu-tRNA(Gln) in organisms which lack glutaminyl-tRNA synthetase. The reaction takes place in the presence of glutamine and ATP through an activated gamma-phospho-Glu-tRNA(Gln). The GatDE system is specific for glutamate and does not act on aspartate. This chain is Glutamyl-tRNA(Gln) amidotransferase subunit E, found in Thermococcus gammatolerans (strain DSM 15229 / JCM 11827 / EJ3).